The following is a 446-amino-acid chain: 6-methylsalicylate 1-monooxygenase atA (446 aa).

A helical membrane pass occupies residues 7–27 (VSVAIIGGGIGGLSLAIGLLQ). 2 residues coordinate FAD: E37 and A50. N107 carries an N-linked (GlcNAc...) asparagine glycan. Residue R116 coordinates FAD. Residue R200 is part of the active site. Residues D311 and A324 each coordinate FAD.

The protein belongs to the paxM FAD-dependent monooxygenase family. It depends on FAD as a cofactor.

It localises to the membrane. It catalyses the reaction 6-methylsalicylate + AH2 + O2 + H(+) = 3-methylcatechol + A + CO2 + H2O. It functions in the pathway secondary metabolite biosynthesis. 6-methylsalicylate 1-monooxygenase; part of the gene cluster that mediates the biosynthesis of terreic acid, a quinone epoxide inhibitor of Bruton's tyrosine kinase. The first step of the pathway is the synthesis of 6-methylsalicylic acid (6-MSA) by the 6-methylsalicylic acid synthase atX. In the biosynthesis of 6-MSA, atX utilizes one acetyl-CoA and three malonyl-CoAs as its substrates and catalyzes a series of programmed reactions including Claisen condensation, reduction, aldol cyclization, and the hydrolytic cleavage that yields 6-MSA. The 6-methylsalicylate 1-monooxygenase atA then catalyzes the decarboxylative hydroxylation of 6-MSA to 3-methylcatechol. The next step is the conversion of 3-methylcatechol to 3-methyl-1,2,4-benzenetriol by cytochrome P450 monooxygenase atE, which is enhanced by cytochrome P450 monooxygenase atG. Then, the epoxidase atD catalyzes the epoxidation and hydroxyl oxidation of 3-methyl-1,2,4-benzenetriol to terremutin. Lastly, GMC oxidoreductase atC oxidizes terremutin to terreic acid. This Aspergillus terreus (strain NIH 2624 / FGSC A1156) protein is 6-methylsalicylate 1-monooxygenase atA.